Reading from the N-terminus, the 118-residue chain is Large ribosomal subunit protein mL53 (118 aa).

The disordered stretch occupies residues 99 to 118 (AAAASAPGADKVAPGTSTRR).

The protein belongs to the mitochondrion-specific ribosomal protein mL53 family. As to quaternary structure, component of the mitochondrial ribosome large subunit (39S) which comprises a 16S rRNA and about 50 distinct proteins.

It localises to the mitochondrion. This chain is Large ribosomal subunit protein mL53 (Mrpl53), found in Mus musculus (Mouse).